Here is a 215-residue protein sequence, read N- to C-terminus: MSKIYDWFEERLEIQAIADDISSKYVPPHVNIFYCLGGIVFVSFLIQVATGFAMTFYYRPTVAEAFTSVEYIMTDVNFGWLIRSIHRWSASMMVLMMILHVFRVYLTGGFKKPRELTWVTGVILGVLTVSFGVTGYSLPWDQIGYWAVKIVTGVPDAVPVVGESIVELLRGGVSVGQGTLTRFYSLHTFVLPLLTAVFMLMHFLMIRKQGISGPL.

Residues 32 to 52 (IFYCLGGIVFVSFLIQVATGF) traverse the membrane as a helical segment. Cys35 lines the heme c pocket. Heme b-binding residues include His86 and His100. The next 3 membrane-spanning stretches (helical) occupy residues 90–110 (ASMMVLMMILHVFRVYLTGGF), 116–136 (LTWVTGVILGVLTVSFGVTGY), and 186–206 (LHTFVLPLLTAVFMLMHFLMI). Heme b is bound by residues His187 and His202.

This sequence belongs to the cytochrome b family. PetB subfamily. The 4 large subunits of the cytochrome b6-f complex are cytochrome b6, subunit IV (17 kDa polypeptide, PetD), cytochrome f and the Rieske protein, while the 4 small subunits are PetG, PetL, PetM and PetN. The complex functions as a dimer. The cofactor is heme b. It depends on heme c as a cofactor.

The protein resides in the plastid. It is found in the chloroplast thylakoid membrane. In terms of biological role, component of the cytochrome b6-f complex, which mediates electron transfer between photosystem II (PSII) and photosystem I (PSI), cyclic electron flow around PSI, and state transitions. The sequence is that of Cytochrome b6 from Porphyra purpurea (Red seaweed).